The following is a 314-amino-acid chain: D-alanine--D-alanine ligase (314 aa).

Residues 115–310 (KQVWQSVGLV…FNELVLEILA (196 aa)) enclose the ATP-grasp domain. 141–196 (LDSLGGQGFVKPAHEGSSIGMSVVSTAQELKAAYEKAAHYDAKVLVERRIVGREFT) contributes to the ATP binding site. 3 residues coordinate Mg(2+): D264, E277, and N279.

The protein belongs to the D-alanine--D-alanine ligase family. It depends on Mg(2+) as a cofactor. Requires Mn(2+) as cofactor.

It is found in the cytoplasm. The catalysed reaction is 2 D-alanine + ATP = D-alanyl-D-alanine + ADP + phosphate + H(+). Its pathway is cell wall biogenesis; peptidoglycan biosynthesis. In terms of biological role, cell wall formation. This Saccharophagus degradans (strain 2-40 / ATCC 43961 / DSM 17024) protein is D-alanine--D-alanine ligase.